A 540-amino-acid polypeptide reads, in one-letter code: Probable pectinesterase/pectinesterase inhibitor 60 (540 aa).

The first 31 residues, 1 to 31 (MNIMMVQNISFLSLHLLLILLLCLRPLTTVA), serve as a signal peptide directing secretion. Residues 32-185 (DGNSTNIDGW…SHLISNCLAV (154 aa)) are pectinesterase inhibitor 60. Residues Asn-34, Asn-91, Asn-95, Asn-120, Asn-161, and Asn-195 are each glycosylated (N-linked (GlcNAc...) asparagine). Positions 225-526 (NLVVAKDGSG…FSVGKFIAGT (302 aa)) are pectinesterase 60. 2 residues coordinate substrate: Thr-302 and Gln-332. Residue Asp-355 is the Proton donor; for pectinesterase activity of the active site. The cysteines at positions 369 and 389 are disulfide-linked. Catalysis depends on Asp-376, which acts as the Nucleophile; for pectinesterase activity. Substrate is bound by residues Arg-444 and Trp-446.

In the N-terminal section; belongs to the PMEI family. The protein in the C-terminal section; belongs to the pectinesterase family. Expressed in siliques.

It localises to the secreted. The protein resides in the cell wall. It carries out the reaction [(1-&gt;4)-alpha-D-galacturonosyl methyl ester](n) + n H2O = [(1-&gt;4)-alpha-D-galacturonosyl](n) + n methanol + n H(+). Its pathway is glycan metabolism; pectin degradation; 2-dehydro-3-deoxy-D-gluconate from pectin: step 1/5. Acts in the modification of cell walls via demethylesterification of cell wall pectin. This is Probable pectinesterase/pectinesterase inhibitor 60 (PME60) from Arabidopsis thaliana (Mouse-ear cress).